Consider the following 527-residue polypeptide: Amine oxidase [flavin-containing] A (527 aa).

Position 1 is an N-acetylmethionine (Met-1). Residues 1 to 497 are Cytoplasmic-facing; sequence MASQEKASMA…HSFWERNLPS (497 aa). A Phosphoserine modification is found at Ser-383. An S-8alpha-FAD cysteine modification is found at Cys-406. A helical; Anchor for type IV membrane protein transmembrane segment spans residues 498–518; sequence VGGLLKIIGFSTSITALWIVV. The Mitochondrial intermembrane portion of the chain corresponds to 519–527; it reads YKFKLLTRS. The segment at 520–522 is interaction with membrane phospholipid headgroups; the sequence is KFK.

The protein belongs to the flavin monoamine oxidase family. In terms of assembly, monomer, homo- or heterodimer (containing two subunits of similar size). Each subunit contains a covalently bound flavin. Enzymatically active as monomer. FAD serves as cofactor.

The protein localises to the mitochondrion outer membrane. The catalysed reaction is a secondary aliphatic amine + O2 + H2O = a primary amine + an aldehyde + H2O2. It catalyses the reaction a primary methyl amine + O2 + H2O = an aldehyde + H2O2 + NH4(+). The enzyme catalyses (R)-adrenaline + O2 + H2O = (R)-3,4-dihydroxymandelaldehyde + methylamine + H2O2. It carries out the reaction dopamine + O2 + H2O = 3,4-dihydroxyphenylacetaldehyde + H2O2 + NH4(+). The catalysed reaction is tyramine + O2 + H2O = (4-hydroxyphenyl)acetaldehyde + H2O2 + NH4(+). It catalyses the reaction (R)-noradrenaline + O2 + H2O = (R)-3,4-dihydroxymandelaldehyde + H2O2 + NH4(+). The enzyme catalyses serotonin + O2 + H2O = (5-hydroxyindol-3-yl)acetaldehyde + H2O2 + NH4(+). It carries out the reaction kynuramine + O2 + H2O = 3-(2-aminophenyl)-3-oxopropanal + H2O2 + NH4(+). The catalysed reaction is tryptamine + O2 + H2O = indole-3-acetaldehyde + H2O2 + NH4(+). It catalyses the reaction 2-phenylethylamine + O2 + H2O = 2-phenylacetaldehyde + H2O2 + NH4(+). Catalyzes the oxidative deamination of primary and some secondary amine such as neurotransmitters, with concomitant reduction of oxygen to hydrogen peroxide and has important functions in the metabolism of neuroactive and vasoactive amines in the central nervous system and peripheral tissues. Preferentially oxidizes serotonin. Also catalyzes the oxidative deamination of kynuramine to 3-(2-aminophenyl)-3-oxopropanal that can spontaneously condense to 4-hydroxyquinoline. The chain is Amine oxidase [flavin-containing] A from Equus caballus (Horse).